A 251-amino-acid polypeptide reads, in one-letter code: MTSIILIPARMASTRLPGKPLADIAGRTMIAQVVARALESGVGRVVVATDTEEVAAAARAEGVEAVMTRADHQSGSDRIFEALQTIDPGATAEIVINLQGDLPTIPPEDIRAVVRPLENADTDIATLGVEISDEEEKANPNVVKIVGVPVKTASDALRLRALYFTRATAPWGEGPLFHHIGIYAYRRRALERFVALPPGTLEMRERLEQLRALEAGMRIEAEIVRSVPLGVDTPADLERARQLLSARTESR.

The protein belongs to the KdsB family.

The protein localises to the cytoplasm. It catalyses the reaction 3-deoxy-alpha-D-manno-oct-2-ulosonate + CTP = CMP-3-deoxy-beta-D-manno-octulosonate + diphosphate. The protein operates within nucleotide-sugar biosynthesis; CMP-3-deoxy-D-manno-octulosonate biosynthesis; CMP-3-deoxy-D-manno-octulosonate from 3-deoxy-D-manno-octulosonate and CTP: step 1/1. It functions in the pathway bacterial outer membrane biogenesis; lipopolysaccharide biosynthesis. Activates KDO (a required 8-carbon sugar) for incorporation into bacterial lipopolysaccharide in Gram-negative bacteria. The polypeptide is 3-deoxy-manno-octulosonate cytidylyltransferase (Chelativorans sp. (strain BNC1)).